The following is a 189-amino-acid chain: Vacuolar iron transporter homolog 2 (189 aa).

Residues 1–10 are Cytoplasmic-facing; the sequence is MARAQWLRAA. Residues 11 to 31 form a helical membrane-spanning segment; that stretch reads VLGANDGLVSVASLMIGIGAV. Residues 32 to 38 are Vacuolar-facing; sequence NENNKAM. Residues 39–59 form a helical membrane-spanning segment; the sequence is LVSGLAGLVAGACSMAIGEFV. At 60 to 97 the chain is on the cytoplasmic side; the sequence is SVYAQYDIEVTQIERDGDIDGADAAAAREKLPSPTQAA. The helical transmembrane segment at 98 to 118 threads the bilayer; sequence FASALAFAIGGLLPLLTSGFI. Topologically, residues 119–124 are vacuolar; the sequence is KPWGPR. The helical transmembrane segment at 125 to 145 threads the bilayer; sequence VGVVCAASSVGLAGFGAAGGY. Over 146 to 159 the chain is Cytoplasmic; the sequence is LGGANMVRSGTRVL. Residues 160–180 traverse the membrane as a helical segment; sequence LGGWLAMLITYAVLRLFATIF. The Vacuolar portion of the chain corresponds to 181–189; the sequence is HGMNISSSA.

Belongs to the CCC1 family.

Its subcellular location is the vacuole membrane. It carries out the reaction Fe(2+)(in) = Fe(2+)(out). Its function is as follows. Probable vacuolar iron transporter that may be involved in the regulation of iron distribution throughout the plant. The chain is Vacuolar iron transporter homolog 2 from Oryza sativa subsp. japonica (Rice).